The following is a 364-amino-acid chain: UDP-N-acetylglucosamine--N-acetylmuramyl-(pentapeptide) pyrophosphoryl-undecaprenol N-acetylglucosamine transferase (364 aa).

Residues 15–17 (TGG), asparagine 123, arginine 164, serine 191, and glutamine 286 each bind UDP-N-acetyl-alpha-D-glucosamine.

This sequence belongs to the glycosyltransferase 28 family. MurG subfamily.

Its subcellular location is the cell inner membrane. It carries out the reaction di-trans,octa-cis-undecaprenyl diphospho-N-acetyl-alpha-D-muramoyl-L-alanyl-D-glutamyl-meso-2,6-diaminopimeloyl-D-alanyl-D-alanine + UDP-N-acetyl-alpha-D-glucosamine = di-trans,octa-cis-undecaprenyl diphospho-[N-acetyl-alpha-D-glucosaminyl-(1-&gt;4)]-N-acetyl-alpha-D-muramoyl-L-alanyl-D-glutamyl-meso-2,6-diaminopimeloyl-D-alanyl-D-alanine + UDP + H(+). The protein operates within cell wall biogenesis; peptidoglycan biosynthesis. Functionally, cell wall formation. Catalyzes the transfer of a GlcNAc subunit on undecaprenyl-pyrophosphoryl-MurNAc-pentapeptide (lipid intermediate I) to form undecaprenyl-pyrophosphoryl-MurNAc-(pentapeptide)GlcNAc (lipid intermediate II). The protein is UDP-N-acetylglucosamine--N-acetylmuramyl-(pentapeptide) pyrophosphoryl-undecaprenol N-acetylglucosamine transferase of Prochlorococcus marinus (strain MIT 9515).